The following is a 230-amino-acid chain: Uracil-DNA glycosylase (230 aa).

The active-site Proton acceptor is Asp70.

The protein belongs to the uracil-DNA glycosylase (UDG) superfamily. UNG family.

It localises to the cytoplasm. The catalysed reaction is Hydrolyzes single-stranded DNA or mismatched double-stranded DNA and polynucleotides, releasing free uracil.. Functionally, excises uracil residues from the DNA which can arise as a result of misincorporation of dUMP residues by DNA polymerase or due to deamination of cytosine. In Pseudomonas putida (strain W619), this protein is Uracil-DNA glycosylase.